The following is a 188-amino-acid chain: Apolipophorin-3 (188 aa).

Residues 1 to 17 (MVAKLFVLVACIALSHA) form the signal peptide. Residues 18–22 (AMVRR) constitute a propeptide that is removed on maturation.

It belongs to the insect apolipophorin-3 family. Equilibrium between a soluble monomer and a bound lipoprotein form. Apolipophorin-3 associates with lipophorin during lipid loading until each particle contains 9 or 14 molecules of apolipophorin-3. Expressed in fat body and secreted in hemolymph. Also expressed in ovary and testis at lower levels.

Its subcellular location is the secreted. Assists in the loading of diacylglycerol, generated from triacylglycerol stores in the fat body through the action of adipokinetic hormone, into lipophorin, the hemolymph lipoprotein. It increases the lipid carrying capacity of lipophorin by covering the expanding hydrophobic surface resulting from diacylglycerol uptake. It thus plays a critical role in the transport of lipids during flight in several species of insects. The sequence is that of Apolipophorin-3 from Spodoptera litura (Asian cotton leafworm).